A 400-amino-acid chain; its full sequence is Cytohesin-2 (400 aa).

Residues 10-67 (DLTPEERMELENIRRRKQELLVEIQRLREELSEAMSEVEGLEANEGSKTLQRNRKMAM) adopt a coiled-coil conformation. One can recognise an SEC7 domain in the interval 72-201 (FNMDPKKGIQ…VIMLNTSLHN (130 aa)). The 118-residue stretch at 259–376 (NPDREGWLLK…WIKSIQAAVS (118 aa)) folds into the PH domain. A 1,2-diacyl-sn-glycero-3-phospho-(1D-myo-inositol-3,4,5-trisphosphate) contacts are provided by residues 268–276 (KLGGGRVKT), Arg-280, Tyr-291, Arg-301, Lys-339, Asn-350, and His-351. A C-terminal autoinhibitory region region spans residues 387 to 395 (RKKRISVKK).

In terms of assembly, heteromer. Composed of TAMALIN, CYTH2 and at least one GRM1. Interacts with ARRB1. Interacts with ARL4D; the interaction is direct. Directly interacts with CCDC120 through the coiled coil domain; this interaction stabilizes CCDC120, possibly by preventing its ubiquitination, and is required for neurite growth in a neuroblastoma cell line. Interacts with FRMD4A. Interacts (via N-terminal domain) with INAVA (via N-terminal domain). Present in all tissues tested, with highest protein levels in brain and adrenal.

It is found in the cell membrane. The protein resides in the cytoplasm. It localises to the cell projection. The protein localises to the growth cone. Its subcellular location is the cell junction. It is found in the tight junction. The protein resides in the adherens junction. Its function is as follows. Acts as a guanine-nucleotide exchange factor (GEF). Promotes guanine-nucleotide exchange on ARF1, ARF3 and ARF6. Activates ARF factors through replacement of GDP with GTP. The cell membrane form, in association with ARL4 proteins, recruits ARF6 to the plasma membrane. Involved in neurite growth. The sequence is that of Cytohesin-2 (Cyth2) from Mus musculus (Mouse).